The chain runs to 1003 residues: Glycine--tRNA ligase (1003 aa).

The interval 1–310 (MSSQPLTLQT…VTPKKIPTIC (310 aa)) is glycine--tRNA ligase alpha subunit. The tract at residues 311–1003 (QPEDFLLEIG…CFGFYAWGVL (693 aa)) is glycine--tRNA ligase beta subunit.

The protein belongs to the class-II aminoacyl-tRNA synthetase family.

The protein localises to the cytoplasm. The catalysed reaction is tRNA(Gly) + glycine + ATP = glycyl-tRNA(Gly) + AMP + diphosphate. The chain is Glycine--tRNA ligase (glyQS) from Chlamydia trachomatis serovar D (strain ATCC VR-885 / DSM 19411 / UW-3/Cx).